We begin with the raw amino-acid sequence, 131 residues long: Small ribosomal subunit protein uS8 (131 aa).

The protein belongs to the universal ribosomal protein uS8 family. Part of the 30S ribosomal subunit. Contacts proteins S5 and S12.

One of the primary rRNA binding proteins, it binds directly to 16S rRNA central domain where it helps coordinate assembly of the platform of the 30S subunit. The polypeptide is Small ribosomal subunit protein uS8 (Malacoplasma penetrans (strain HF-2) (Mycoplasma penetrans)).